Reading from the N-terminus, the 266-residue chain is Ribonuclease 3 (266 aa).

The segment at 1 to 35 (MMDESADIKPVPTSEDVAAPSGTEPVAPAPKKKRA) is disordered. Residues 43 to 171 (MAAIEQRLGH…VIGAVYLDGG (129 aa)) form the RNase III domain. E84 contributes to the Mg(2+) binding site. D88 is an active-site residue. Mg(2+) contacts are provided by D157 and E160. E160 is a catalytic residue. In terms of domain architecture, DRBM spans 196-265 (DPKTVLQEWA…ASAMIVREGV (70 aa)).

It belongs to the ribonuclease III family. Homodimer. Requires Mg(2+) as cofactor.

The protein localises to the cytoplasm. It catalyses the reaction Endonucleolytic cleavage to 5'-phosphomonoester.. Digests double-stranded RNA. Involved in the processing of primary rRNA transcript to yield the immediate precursors to the large and small rRNAs (23S and 16S). Processes some mRNAs, and tRNAs when they are encoded in the rRNA operon. Processes pre-crRNA and tracrRNA of type II CRISPR loci if present in the organism. The chain is Ribonuclease 3 from Nitrobacter winogradskyi (strain ATCC 25391 / DSM 10237 / CIP 104748 / NCIMB 11846 / Nb-255).